A 294-amino-acid chain; its full sequence is MASSSRLCDSCKSTAATLFCRADAAFLCGDCDGKIHTANKLASRHERVWLCEVCEQAPAHVTCKADAAALCVTCDRDIHSANPLSRRHERVPITPFYDAVGPAKSASSSVNFVDEDGGDVTASWLLAKEGIEITNLFSDLDYPKIEVTSEENSSGNDGVVPVQNKLFLNEDYFNFDLSASKISQQGFNFINQTVSTRTIDVPLVPESGGVTAEMTNTETPAVQLSPAEREARVLRYREKRKNRKFEKTIRYASRKAYAEMRPRIKGRFAKRTDSRENDGGDVGVYGGFGVVPSF.

Positions 8, 11, 31, 36, 51, 54, 74, and 79 each coordinate Zn(2+). A B box-type 1; atypical zinc finger spans residues 8–50 (CDSCKSTAATLFCRADAAFLCGDCDGKIHTANKLASRHERVWL). A B box-type 2; atypical zinc finger spans residues 51-93 (CEVCEQAPAHVTCKADAAALCVTCDRDIHSANPLSRRHERVPI). Residues 229–271 (REARVLRYREKRKNRKFEKTIRYASRKAYAEMRPRIKGRFAKR) enclose the CCT domain.

The protein belongs to the CONSTANS family.

Its subcellular location is the nucleus. The sequence is that of Zinc finger protein CONSTANS-LIKE 3 (COL3) from Arabidopsis thaliana (Mouse-ear cress).